Reading from the N-terminus, the 115-residue chain is Mediator of RNA polymerase II transcription subunit 22 (115 aa).

It belongs to the Mediator complex subunit 22 family. Component of the Mediator complex.

It localises to the nucleus. Functionally, component of the Mediator complex, a coactivator involved in the regulated transcription of nearly all RNA polymerase II-dependent genes. Mediator functions as a bridge to convey information from gene-specific regulatory proteins to the basal RNA polymerase II transcription machinery. Mediator is recruited to promoters by direct interactions with regulatory proteins and serves as a scaffold for the assembly of a functional preinitiation complex with RNA polymerase II and the general transcription factors. The sequence is that of Mediator of RNA polymerase II transcription subunit 22 (SRB6) from Candida albicans (strain SC5314 / ATCC MYA-2876) (Yeast).